A 347-amino-acid chain; its full sequence is Probable replication factor C subunit 5 (347 aa).

64 to 71 lines the ATP pocket; the sequence is GPPGTGKT.

Belongs to the activator 1 small subunits family. In terms of assembly, heteropentamer of various rfc subunits that forms a complex (RFC) with PCNA in the presence of ATP.

The protein localises to the nucleus. Functionally, the elongation of primed DNA templates by DNA polymerase delta and epsilon requires the action of the accessory proteins PCNA and activator 1. In Dictyostelium discoideum (Social amoeba), this protein is Probable replication factor C subunit 5 (rfc5).